The chain runs to 726 residues: Serine/threonine-protein kinase PKH3 (726 aa).

The 262-residue stretch at Phe10–Phe271 folds into the Protein kinase domain. ATP-binding positions include Leu16 to Val24 and Lys39. The active-site Proton acceptor is the Asp136. Residues Gln629–Tyr679 are disordered. Residues Gln663–Thr673 show a composition bias toward basic and acidic residues.

It belongs to the protein kinase superfamily. Ser/Thr protein kinase family.

It carries out the reaction L-seryl-[protein] + ATP = O-phospho-L-seryl-[protein] + ADP + H(+). The enzyme catalyses L-threonyl-[protein] + ATP = O-phospho-L-threonyl-[protein] + ADP + H(+). Serine/threonine-protein kinase. The protein is Serine/threonine-protein kinase PKH3 (PKH3) of Eremothecium gossypii (strain ATCC 10895 / CBS 109.51 / FGSC 9923 / NRRL Y-1056) (Yeast).